Reading from the N-terminus, the 456-residue chain is MGLEWSSPGERQPLLFPGGPRSPRVFGRRWLVLLLFSVLAFLQGLVWNSWGPIQISARTAYKFSGLDIALLVLWGPIGFLPCFLFMWLMDNRGLRITVLLTALLMVLGAGLRCVPVEDLAIRRILIHGGQLLNGFAGPTVMNAAPFLSTTWFAPDERATATAIASMLNYLGGACAFLVGPLVVPAPNSTSGLLLYSGSTDAIKDRIEAVMYAEFGIIFVVFAAILAYFPARPPVPPSVAAASRRLSYRTSIFRLLSNLRFLLIVLAYAIPLGFYSGWIGVLDLILTPVHVTQVDAGWVGFWSIVGGCVVGIAVGRFADSIRGVLKPILLLLFSGATLSATWFTLTFLSNVTHLPLTTATLYTSCILIGVFLNGTVPIFFELFVETVYPIPEGIACGVVTFLSNIFMGVLLVFLTMYQMELSWLNWCLTGSCFLSLFFIACFRESYDRLYLDVFVSV.

Topologically, residues 1–29 (MGLEWSSPGERQPLLFPGGPRSPRVFGRR) are cytoplasmic. A Di-leucine motif; mediates lysosomal localization motif is present at residues 14–15 (LL). A helical transmembrane segment spans residues 30–50 (WLVLLLFSVLAFLQGLVWNSW). Residues 51–67 (GPIQISARTAYKFSGLD) are Lumenal-facing. The chain crosses the membrane as a helical span at residues 68 to 88 (IALLVLWGPIGFLPCFLFMWL). Residues 89-95 (MDNRGLR) lie on the Cytoplasmic side of the membrane. The helical transmembrane segment at 96-116 (ITVLLTALLMVLGAGLRCVPV) threads the bilayer. Topologically, residues 117 to 123 (EDLAIRR) are lumenal. A helical membrane pass occupies residues 124–144 (ILIHGGQLLNGFAGPTVMNAA). Residues 145 to 162 (PFLSTTWFAPDERATATA) lie on the Cytoplasmic side of the membrane. Residues 163 to 183 (IASMLNYLGGACAFLVGPLVV) traverse the membrane as a helical segment. Residues 184–207 (PAPNSTSGLLLYSGSTDAIKDRIE) lie on the Lumenal side of the membrane. An N-linked (GlcNAc...) asparagine glycan is attached at Asn-187. A helical transmembrane segment spans residues 208–228 (AVMYAEFGIIFVVFAAILAYF). Topologically, residues 229–259 (PARPPVPPSVAAASRRLSYRTSIFRLLSNLR) are cytoplasmic. Residues 260–280 (FLLIVLAYAIPLGFYSGWIGV) traverse the membrane as a helical segment. The Lumenal segment spans residues 281 to 292 (LDLILTPVHVTQ). A helical transmembrane segment spans residues 293-313 (VDAGWVGFWSIVGGCVVGIAV). At 314-326 (GRFADSIRGVLKP) the chain is on the cytoplasmic side. Residues 327–347 (ILLLLFSGATLSATWFTLTFL) traverse the membrane as a helical segment. Topologically, residues 348–362 (SNVTHLPLTTATLYT) are lumenal. N-linked (GlcNAc...) asparagine glycosylation is present at Asn-349. A helical transmembrane segment spans residues 363-383 (SCILIGVFLNGTVPIFFELFV). The Cytoplasmic portion of the chain corresponds to 384 to 392 (ETVYPIPEG). The helical transmembrane segment at 393–413 (IACGVVTFLSNIFMGVLLVFL) threads the bilayer. The Lumenal segment spans residues 414 to 420 (TMYQMEL). Residues 421–441 (SWLNWCLTGSCFLSLFFIACF) traverse the membrane as a helical segment. Residues 442-456 (RESYDRLYLDVFVSV) lie on the Cytoplasmic side of the membrane.

It belongs to the major facilitator superfamily.

Its subcellular location is the lysosome membrane. It catalyses the reaction pyridoxine(out) + n H(+)(out) = pyridoxine(in) + n H(+)(in). Its function is as follows. Mediates H(+)-dependent pyridoxine transport. This Xenopus laevis (African clawed frog) protein is Solute carrier family 49 member 4 homolog (slc49a4).